The chain runs to 219 residues: tRNA (guanine-N(7)-)-methyltransferase (219 aa).

Positions 43, 68, 101, and 124 each coordinate S-adenosyl-L-methionine. Substrate-binding residues include Lys128 and Asp160.

Belongs to the class I-like SAM-binding methyltransferase superfamily. TrmB family.

The catalysed reaction is guanosine(46) in tRNA + S-adenosyl-L-methionine = N(7)-methylguanosine(46) in tRNA + S-adenosyl-L-homocysteine. It functions in the pathway tRNA modification; N(7)-methylguanine-tRNA biosynthesis. Functionally, catalyzes the formation of N(7)-methylguanine at position 46 (m7G46) in tRNA. The chain is tRNA (guanine-N(7)-)-methyltransferase from Clostridium botulinum (strain Eklund 17B / Type B).